The primary structure comprises 61 residues: Large ribosomal subunit protein uL30 (61 aa).

The protein belongs to the universal ribosomal protein uL30 family. As to quaternary structure, part of the 50S ribosomal subunit.

The protein is Large ribosomal subunit protein uL30 of Chlorobaculum parvum (strain DSM 263 / NCIMB 8327) (Chlorobium vibrioforme subsp. thiosulfatophilum).